We begin with the raw amino-acid sequence, 458 residues long: Ammonium transporter Rh type B (458 aa).

Over 1–13 the chain is Cytoplasmic; that stretch reads MAGSPSRAAGRRL. The helical transmembrane segment at 14 to 34 threads the bilayer; sequence QLPLLCLFLQGATAVLFAVFV. Residues 35–61 lie on the Extracellular side of the membrane; that stretch reads RYNHKTDAALWHRSNHSNADNEFYFRY. The N-linked (GlcNAc...) asparagine glycan is linked to asparagine 49. Residues 62-82 form a helical membrane-spanning segment; the sequence is PSFQDVHAMVFVGFGFLMVFL. Over 83–86 the chain is Cytoplasmic; that stretch reads QRYG. The chain crosses the membrane as a helical span at residues 87 to 107; sequence FSSVGFTFLLAAFALQWSTLV. Topologically, residues 108-124 are extracellular; sequence QGFLHSFHGGHIHVGVE. A helical membrane pass occupies residues 125–145; the sequence is SMINADFCAGAVLISFGAVLG. Residues 146–149 lie on the Cytoplasmic side of the membrane; sequence KTGP. A helical transmembrane segment spans residues 150 to 170; it reads AQLLLMALLEVVLFGINEFVL. Over 171-178 the chain is Extracellular; that stretch reads LHLLGVRD. Residues 179–201 traverse the membrane as a helical segment; it reads AGGSMTIHTFGAYFGLVLSRVLY. Residues 202–219 lie on the Cytoplasmic side of the membrane; the sequence is RPQLEKSKHRQGSVYHSD. Residues 220-240 form a helical membrane-spanning segment; that stretch reads LFAMIGTIFLWIFWPSFNAAL. Over 241 to 251 the chain is Extracellular; that stretch reads TALGAGQHRTA. The helical transmembrane segment at 252-272 threads the bilayer; the sequence is LNTYYSLAASTLGTFALSALV. Residues 273–282 lie on the Cytoplasmic side of the membrane; the sequence is GEDGRLDMVH. The chain crosses the membrane as a helical span at residues 283–303; that stretch reads IQNAALAGGVVVGTSSEMMLT. Position 304 (proline 304) is a topological domain, extracellular. Residues 305-325 traverse the membrane as a helical segment; that stretch reads FGALTAGFLAGTVSTLGYKFF. Residues 326-346 are Cytoplasmic-facing; it reads RPILESKFKVQDTCGVHNLHG. The chain crosses the membrane as a helical span at residues 347 to 367; the sequence is MPGVLGALLGVLVAGLATHEA. The Extracellular portion of the chain corresponds to 368–393; that stretch reads YGDGLESVFPLIAEGQRSATSQAMHQ. A helical membrane pass occupies residues 394–414; the sequence is LFGLFVTLMFASVGGGLGGLL. At 415 to 458 the chain is on the cytoplasmic side; it reads LKLPFLDSPPDSQCYEDQVHWQVPGEHEDKAQRPLRVEEADTQA. The interval 416–424 is interaction with ANK3; sequence KLPFLDSPP. The Basolateral sorting signal signature appears at 429 to 432; sequence YEDQ. Positions 439 to 458 are disordered; the sequence is GEHEDKAQRPLRVEEADTQA.

The protein belongs to the ammonium transporter (TC 2.A.49) family. Rh subfamily. Interacts (via C-terminus) with ANK2 and ANK3; required for targeting to the basolateral membrane. In terms of processing, N-glycosylated.

It localises to the cell membrane. The protein resides in the basolateral cell membrane. The enzyme catalyses NH4(+)(in) = NH4(+)(out). It carries out the reaction methylamine(out) = methylamine(in). It catalyses the reaction CO2(out) = CO2(in). In terms of biological role, ammonium transporter involved in the maintenance of acid-base homeostasis. Transports ammonium and its related derivative methylammonium across the basolateral plasma membrane of epithelial cells likely contributing to renal transepithelial ammonia transport and ammonia metabolism. May transport either NH4(+) or NH3 ammonia species predominantly mediating an electrogenic NH4(+) transport. May act as a CO2 channel providing for renal acid secretion. This chain is Ammonium transporter Rh type B (RHBG), found in Pan troglodytes (Chimpanzee).